Here is a 246-residue protein sequence, read N- to C-terminus: NH(3)-dependent NAD(+) synthetase (246 aa).

29–36 is an ATP binding site; the sequence is GLSGGIDS. A Mg(2+)-binding site is contributed by D35. Residue R110 coordinates deamido-NAD(+). T130 is a binding site for ATP. E135 is a binding site for Mg(2+). The ATP site is built by K159 and S181.

Belongs to the NAD synthetase family. In terms of assembly, homodimer.

The enzyme catalyses deamido-NAD(+) + NH4(+) + ATP = AMP + diphosphate + NAD(+) + H(+). It functions in the pathway cofactor biosynthesis; NAD(+) biosynthesis; NAD(+) from deamido-NAD(+) (ammonia route): step 1/1. In terms of biological role, catalyzes the ATP-dependent amidation of deamido-NAD to form NAD. Uses ammonia as a nitrogen source. The protein is NH(3)-dependent NAD(+) synthetase of Campylobacter jejuni subsp. jejuni serotype O:2 (strain ATCC 700819 / NCTC 11168).